The chain runs to 475 residues: Citrate synthase, mitochondrial (475 aa).

Catalysis depends on residues His310, His356, and Asp411.

This sequence belongs to the citrate synthase family.

The protein resides in the mitochondrion matrix. The enzyme catalyses oxaloacetate + acetyl-CoA + H2O = citrate + CoA + H(+). It participates in carbohydrate metabolism; tricarboxylic acid cycle; isocitrate from oxaloacetate: step 1/2. This is Citrate synthase, mitochondrial (cit-1) from Aspergillus niger.